Here is a 1158-residue protein sequence, read N- to C-terminus: Nuclear receptor-interacting protein 1 (1158 aa).

The interaction with ZNF366 stretch occupies residues 1-415 (MTHGEELGSD…EESSTPTTID (415 aa)). Positions 21-25 (LEGLL) match the LXXLL motif 1 motif. Positions 33–56 (SGTAVDKKSAGHNEEDQNFNISGS) are disordered. A compositionally biased stretch (basic and acidic residues) spans 37–47 (VDKKSAGHNEE). Residues 78-333 (MLHLKKARLL…HLNGQARTSS (256 aa)) are repression domain 1. A Phosphoserine modification is found at Ser-104. Lys-111 is modified (N6-acetyllysine; alternate). Lys-111 is covalently cross-linked (Glycyl lysine isopeptide (Lys-Gly) (interchain with G-Cter in SUMO2); alternate). The LXXLL motif 2 motif lies at 133–137 (LASLL). Residue Lys-158 is modified to N6-acetyllysine. A Glycyl lysine isopeptide (Lys-Gly) (interchain with G-Cter in SUMO2) cross-link involves residue Lys-170. An LXXLL motif 3 motif is present at residues 185 to 189 (LKTLL). Residues Lys-195 and Lys-198 each participate in a glycyl lysine isopeptide (Lys-Gly) (interchain with G-Cter in SUMO2) cross-link. At Thr-207 the chain carries Phosphothreonine. Ser-218 is modified (phosphoserine). Positions 266–270 (LALLL) match the LXXLL motif 4 motif. Residues Lys-286 and Lys-310 each carry the N6-acetyllysine modification. Ser-356 is subject to Phosphoserine. Residue Lys-372 forms a Glycyl lysine isopeptide (Lys-Gly) (interchain with G-Cter in SUMO2) linkage. Ser-378 bears the Phosphoserine mark. Residues 380–384 (LLHLL) carry the LXXLL motif 5 motif. The interval 393-435 (MNGHSHSERGSIFEESSTPTTIDEYSDNNPSFTDDSSGDESSY) is disordered. The segment covering 406–435 (EESSTPTTIDEYSDNNPSFTDDSSGDESSY) has biased composition (polar residues). A repression domain 2 region spans residues 410–700 (TPTTIDEYSD…PTGPEPGLSG (291 aa)). The required for targeting to small nuclear foci stretch occupies residues 431 to 472 (DESSYSNCVPIDLSCKHRTEKSESDQPVSLDNFTQSLLNTWD). The short motif at 440 to 446 (PIDLSCK) is the CTBP-binding; principal site element. Residues Lys-446 and Lys-481 each carry the N6-acetyllysine modification. At Ser-487 the chain carries Phosphoserine. The short motif at 500–504 (LLQLL) is the LXXLL motif 6 element. A Glycyl lysine isopeptide (Lys-Gly) (interchain with G-Cter in SUMO2) cross-link involves residue Lys-508. Ser-518 carries the post-translational modification Phosphoserine. N6-acetyllysine is present on Lys-528. The disordered stretch occupies residues 540–563 (IESPSTNRTTPVSTPPLLTSSKAG). Position 542 is a phosphoserine (Ser-542). The segment covering 548–560 (TTPVSTPPLLTSS) has biased composition (low complexity). Phosphoserine is present on Ser-564. 2 consecutive short sequence motifs (CTBP-binding) follow at residues 565–569 (PINLS) and 599–603 (SMDLT). 2 disordered regions span residues 592-622 (TNTA…AQNS) and 641-663 (SSMS…DKPI). Positions 601-610 (DLTKSKDPPG) are enriched in basic and acidic residues. At Lys-606 the chain carries N6-acetyllysine. A compositionally biased stretch (polar residues) spans 641 to 659 (SSMSVEEQRPSKQLLTGNT). Ser-671 is modified (phosphoserine). An LXXLL motif 7 motif is present at residues 713–717 (LQLLL). The tract at residues 716–745 (LLGNPNKGKSEKKEKTPLRDESTQEHSERA) is disordered. The segment covering 723–745 (GKSEKKEKTPLRDESTQEHSERA) has biased composition (basic and acidic residues). Residues 735 to 885 (DESTQEHSER…NIVDAANNHS (151 aa)) form a repression domain 3 region. Residues 753–1158 (VKIKSEPCDD…SVLTIKKESE (406 aa)) form an interaction with ZNF366 region. Glycyl lysine isopeptide (Lys-Gly) (interchain with G-Cter in SUMO2) cross-links involve residues Lys-756 and Lys-802. Position 807 is a phosphoserine (Ser-807). An LXXLL motif 8 motif is present at residues 819 to 823 (LSRLL). Residues Lys-850 and Lys-901 each participate in a glycyl lysine isopeptide (Lys-Gly) (interchain with G-Cter in SUMO2) cross-link. Lys-931 bears the N6-acetyllysine; alternate mark. Residue Lys-931 forms a Glycyl lysine isopeptide (Lys-Gly) (interchain with G-Cter in SUMO2); alternate linkage. The short motif at 936-940 (LKQLL) is the LXXLL motif 9 element. Residues 946–950 (VRDLS) carry the CTBP-binding motif. Residues 950 to 974 (SPHRSNSVADSKKKGHKNNVTNSKP) are disordered. Ser-1001 is subject to Phosphoserine. The short motif at 1061–1074 (LTKTNPILYYMLQK) is the Ligand-dependent nuclear receptor binding element. Residues Lys-1105, Lys-1115, and Lys-1154 each participate in a glycyl lysine isopeptide (Lys-Gly) (interchain with G-Cter in SUMO2) cross-link. The interval 1118–1158 (FFNLRSPYNSHMGNNASRPHSANGEVYGLLGSVLTIKKESE) is repression domain 4.

As to quaternary structure, interacts with RARA and RXRB homodimers and RARA/RXRB heterodimers in the presence of ligand. Interacts with HDAC1 and HDAC3 via its N-terminal domain. Interacts with NR2C1 (sumoylated form and via the ligand-binding domain); the interaction results in promoting the repressor activity of NR2C1. Interacts with CTBP1, CTBP2, ESR1, HDAC1, HDAC2, HDAC5, HDAC6, NR2C2, NR3C1, NR3C2, YWHAH, JUN and FOS. Found in a complex with both NR3C1 and YWHAH. Interacts with ZNF366. Interacts with RORA. Acetylation regulates its nuclear translocation and corepressive activity. Acetylation abolishes interaction with CTBP1. Phosphorylation enhances interaction with YWHAH.

Its subcellular location is the nucleus. Modulates transcriptional activation by steroid receptors such as NR3C1, NR3C2 and ESR1. Also modulates transcriptional repression by nuclear hormone receptors. Positive regulator of the circadian clock gene expression: stimulates transcription of BMAL1, CLOCK and CRY1 by acting as a coactivator for RORA and RORC. Involved in the regulation of ovarian function. Plays a role in renal development. This is Nuclear receptor-interacting protein 1 (NRIP1) from Homo sapiens (Human).